A 152-amino-acid polypeptide reads, in one-letter code: Deoxyuridine 5'-triphosphate nucleotidohydrolase (152 aa).

Substrate-binding positions include 71-73, Asn-84, 88-90, and Met-98; these read RSG and LID.

It belongs to the dUTPase family. The cofactor is Mg(2+).

It carries out the reaction dUTP + H2O = dUMP + diphosphate + H(+). It participates in pyrimidine metabolism; dUMP biosynthesis; dUMP from dCTP (dUTP route): step 2/2. Functionally, this enzyme is involved in nucleotide metabolism: it produces dUMP, the immediate precursor of thymidine nucleotides and it decreases the intracellular concentration of dUTP so that uracil cannot be incorporated into DNA. The chain is Deoxyuridine 5'-triphosphate nucleotidohydrolase from Citrobacter koseri (strain ATCC BAA-895 / CDC 4225-83 / SGSC4696).